A 107-amino-acid polypeptide reads, in one-letter code: Small polypeptide DEVIL 9 (107 aa).

The span at 1 to 12 shows a compositional bias: basic and acidic residues; it reads MDEKWRLSKKDA. The disordered stretch occupies residues 1–79; that stretch reads MDEKWRLSKK…EKGSITQKYS (79 aa). A helical transmembrane segment spans residues 9–29; the sequence is KKDALAASCSSSSTSSKSKFS. The span at 13–65 shows a compositional bias: low complexity; it reads LAASCSSSSTSSKSKFSRSFSTSASSSKAPAFVRSSSTKCSVPSSSSSSISRS. The tract at residues 73–104 is required for DVL/RTFL small polypeptide activity; the sequence is SITQKYSSLAKEQKGRFYIMRRCVAMLVCWHK.

Belongs to the DVL/RTFL small polypeptides family.

It is found in the cell membrane. Its function is as follows. Small polypeptide acting as a regulatory molecule which coordinates cellular responses required for differentiation, growth and development, probably by restricting polar cell proliferation in lateral organs and coordinating socket cell recruitment and differentiation at trichome sites. This Arabidopsis thaliana (Mouse-ear cress) protein is Small polypeptide DEVIL 9.